The sequence spans 207 residues: Large ribosomal subunit protein bL25 (207 aa).

Belongs to the bacterial ribosomal protein bL25 family. CTC subfamily. As to quaternary structure, part of the 50S ribosomal subunit; part of the 5S rRNA/L5/L18/L25 subcomplex. Contacts the 5S rRNA. Binds to the 5S rRNA independently of L5 and L18.

Functionally, this is one of the proteins that binds to the 5S RNA in the ribosome where it forms part of the central protuberance. This is Large ribosomal subunit protein bL25 from Brucella abortus (strain S19).